Reading from the N-terminus, the 309-residue chain is MKKKLFVSELIKHFDLEVLNHDFPEIEDREILTPSIKRLGLELSGHFIYDAISGVIVGWGTNESKFFEKIGSEKAKSSIEEIFSRKIPMLVLSKGFDKNYYSTIIEIANKHKTPVIFYKASLSEINTILGIYLLQYFAKKVQVHGTLVSVFGMGILIVGDSGLGKSEAALELVQKGHVLISDDAVLVSHYGNKYFGKAPYITKNLIEVRGLGLIDILSVHGLKSVLPECEINFVVELKDYEQNKSNFDRLGNKVLKYQIGEWKIPKIEIPIRQGRSVASLIEASANMFLSKLNGHDVLAMIQERSLNDE.

Residues histidine 144 and lysine 165 contribute to the active site. 159–166 (GDSGLGKS) is an ATP binding site. Position 166 (serine 166) interacts with Mg(2+). Residue aspartate 183 is the Proton acceptor; for phosphorylation activity. Proton donor; for dephosphorylation activity of the active site. The tract at residues 206-215 (IEVRGLGLID) is important for the catalytic mechanism of both phosphorylation and dephosphorylation. Glutamate 207 provides a ligand contact to Mg(2+). The active site involves arginine 249. The important for the catalytic mechanism of dephosphorylation stretch occupies residues 270-275 (PIRQGR).

Belongs to the HPrK/P family. In terms of assembly, homohexamer. Requires Mg(2+) as cofactor.

It carries out the reaction [HPr protein]-L-serine + ATP = [HPr protein]-O-phospho-L-serine + ADP + H(+). It catalyses the reaction [HPr protein]-O-phospho-L-serine + phosphate + H(+) = [HPr protein]-L-serine + diphosphate. Its function is as follows. Catalyzes the ATP- as well as the pyrophosphate-dependent phosphorylation of a specific serine residue in HPr, a phosphocarrier protein of the phosphoenolpyruvate-dependent sugar phosphotransferase system (PTS). HprK/P also catalyzes the pyrophosphate-producing, inorganic phosphate-dependent dephosphorylation (phosphorolysis) of seryl-phosphorylated HPr (P-Ser-HPr). The protein is HPr kinase/phosphorylase (hprK) of Mycoplasmopsis pulmonis (strain UAB CTIP) (Mycoplasma pulmonis).